A 207-amino-acid polypeptide reads, in one-letter code: Large ribosomal subunit protein uL4 (207 aa).

The interval 44-77 (LRQGTHKTKGRSEVRGGGRKPWRQKGTGRARQGS) is disordered. Residues 60–71 (GGRKPWRQKGTG) show a composition bias toward basic residues.

Belongs to the universal ribosomal protein uL4 family. In terms of assembly, part of the 50S ribosomal subunit.

Functionally, one of the primary rRNA binding proteins, this protein initially binds near the 5'-end of the 23S rRNA. It is important during the early stages of 50S assembly. It makes multiple contacts with different domains of the 23S rRNA in the assembled 50S subunit and ribosome. In terms of biological role, forms part of the polypeptide exit tunnel. This is Large ribosomal subunit protein uL4 from Shouchella clausii (strain KSM-K16) (Alkalihalobacillus clausii).